The chain runs to 429 residues: Enolase (429 aa).

Q169 lines the (2R)-2-phosphoglycerate pocket. E211 acts as the Proton donor in catalysis. Residues D248, E289, and D316 each coordinate Mg(2+). (2R)-2-phosphoglycerate is bound by residues K341, R370, S371, and K392. The Proton acceptor role is filled by K341.

Belongs to the enolase family. The cofactor is Mg(2+).

The protein localises to the cytoplasm. The protein resides in the secreted. It localises to the cell surface. The enzyme catalyses (2R)-2-phosphoglycerate = phosphoenolpyruvate + H2O. It participates in carbohydrate degradation; glycolysis; pyruvate from D-glyceraldehyde 3-phosphate: step 4/5. Functionally, catalyzes the reversible conversion of 2-phosphoglycerate (2-PG) into phosphoenolpyruvate (PEP). It is essential for the degradation of carbohydrates via glycolysis. The chain is Enolase from Anaplasma phagocytophilum (strain HZ).